The following is a 328-amino-acid chain: D-cysteine desulfhydrase (328 aa).

N6-(pyridoxal phosphate)lysine is present on lysine 51.

The protein belongs to the ACC deaminase/D-cysteine desulfhydrase family. As to quaternary structure, homodimer. Pyridoxal 5'-phosphate serves as cofactor.

The catalysed reaction is D-cysteine + H2O = hydrogen sulfide + pyruvate + NH4(+) + H(+). Its function is as follows. Catalyzes the alpha,beta-elimination reaction of D-cysteine and of several D-cysteine derivatives. It could be a defense mechanism against D-cysteine. This is D-cysteine desulfhydrase from Salmonella paratyphi A (strain AKU_12601).